The primary structure comprises 281 residues: MQKKYYELFFIVEEQYKNLFLDFAFDLGIEAIEEKDNGVYIRSHESLEEFSWALEIFAQKLTTTFNLNHKIISNLSLVEKENKDWIQEYKKGIKPILVDNVYIHTTWQEEKKNCINIKINPALAFGSGHHESTYSCVKFLQKFSKSKLRALDLGCGSGILGIIMAKFGCNVEICDTDELAIDSSLENARLNGVDFHKAWCGSIDKANGLYNLIVANIIADVILILEKDIKNHLEDNAILILSGILDKYSTRIKEKFQDLELIDEMQINEWCSFVYKNNKKG.

Residues T133, G154, D175, and N216 each contribute to the S-adenosyl-L-methionine site.

The protein belongs to the methyltransferase superfamily. PrmA family.

The protein localises to the cytoplasm. It carries out the reaction L-lysyl-[protein] + 3 S-adenosyl-L-methionine = N(6),N(6),N(6)-trimethyl-L-lysyl-[protein] + 3 S-adenosyl-L-homocysteine + 3 H(+). Its function is as follows. Methylates ribosomal protein L11. The sequence is that of Ribosomal protein L11 methyltransferase from Campylobacter jejuni subsp. jejuni serotype O:2 (strain ATCC 700819 / NCTC 11168).